The primary structure comprises 812 residues: Axin-2 (812 aa).

The interval 1–43 (MNRTLTDPMVSSFREDDPRPPVPGEEGETTCHHPSKLAMMRPK) is disordered. Positions 84–203 (SLHFLLGDQD…LTSDIYLEYV (120 aa)) constitute an RGS domain. 4 disordered regions span residues 275 to 326 (SYRR…AIPP), 388 to 430 (ETMS…TCEE), 446 to 484 (TPGC…SSMN), and 609 to 726 (RQTK…SGCH). Residues 285 to 303 (NRFTSGYSFAPATSANDSE) are compositionally biased toward polar residues. The segment covering 305–323 (SSDALTDDSMSMTDSSVDA) has biased composition (low complexity). An interaction with GSK3B region spans residues 329 to 415 (LGSKKQLQRE…RDESEMSSSS (87 aa)). Residues 388–397 (ETMSSLEERL) show a composition bias toward basic and acidic residues. Acidic residues predominate over residues 401-410 (QEEEERDESE). Over residues 411–421 (MSSSSASHSLP) the composition is skewed to low complexity. The interval 415–467 (SASHSLPLLPPGTCEEDPQAILDEHLSRVLKTPGCQSPGLLRHSPRSRSPEQR) is interaction with beta-catenin. Polar residues predominate over residues 475-484 (STRSQSSSMN). A compositionally biased stretch (basic and acidic residues) spans 672-683 (EEARRRLEEVSK). The 83-residue stretch at 730 to 812 (GSETVVTYFF…KILGKVDRMD (83 aa)) folds into the DIX domain.

In terms of assembly, interacts with hwa; leading to promote the tankyrase-mediated degradation of axin1. In terms of processing, ADP-ribosylated by tankyrase tnks and tnks2. Poly-ADP-ribosylated protein is recognized by rnf146, followed by ubiquitination and subsequent activation of the Wnt signaling pathway. Ubiquitinated by rnf146 when poly-ADP-ribosylated, leading to its degradation and subsequent activation of the Wnt signaling pathway.

The protein resides in the cytoplasm. Its function is as follows. Component of the beta-catenin destruction complex required for regulating ctnnb1 levels through phosphorylation and ubiquitination, and modulating Wnt-signaling. Controls dorsoventral patterning by down-regulating ctnnb1 to inhibit the Wnt signaling pathway and ventralize embryos. The polypeptide is Axin-2 (axin2) (Danio rerio (Zebrafish)).